The chain runs to 689 residues: Glycine--tRNA ligase beta subunit (689 aa).

Belongs to the class-II aminoacyl-tRNA synthetase family. In terms of assembly, tetramer of two alpha and two beta subunits.

Its subcellular location is the cytoplasm. It catalyses the reaction tRNA(Gly) + glycine + ATP = glycyl-tRNA(Gly) + AMP + diphosphate. In Pectobacterium carotovorum subsp. carotovorum (strain PC1), this protein is Glycine--tRNA ligase beta subunit.